A 319-amino-acid polypeptide reads, in one-letter code: Acetyl-coenzyme A carboxylase carboxyl transferase subunit alpha (319 aa).

The region spanning 32-293 (NVDTEVRALE…KAVLLNELEA (262 aa)) is the CoA carboxyltransferase C-terminal domain.

The protein belongs to the AccA family. In terms of assembly, acetyl-CoA carboxylase is a heterohexamer composed of biotin carboxyl carrier protein (AccB), biotin carboxylase (AccC) and two subunits each of ACCase subunit alpha (AccA) and ACCase subunit beta (AccD).

The protein resides in the cytoplasm. It catalyses the reaction N(6)-carboxybiotinyl-L-lysyl-[protein] + acetyl-CoA = N(6)-biotinyl-L-lysyl-[protein] + malonyl-CoA. It functions in the pathway lipid metabolism; malonyl-CoA biosynthesis; malonyl-CoA from acetyl-CoA: step 1/1. In terms of biological role, component of the acetyl coenzyme A carboxylase (ACC) complex. First, biotin carboxylase catalyzes the carboxylation of biotin on its carrier protein (BCCP) and then the CO(2) group is transferred by the carboxyltransferase to acetyl-CoA to form malonyl-CoA. In Xylella fastidiosa (strain M12), this protein is Acetyl-coenzyme A carboxylase carboxyl transferase subunit alpha.